Consider the following 303-residue polypeptide: tRNA-cytidine(32) 2-sulfurtransferase (303 aa).

The short motif at 45-50 is the PP-loop motif element; the sequence is SGGKDS. [4Fe-4S] cluster contacts are provided by Cys-120, Cys-123, and Cys-211.

The protein belongs to the TtcA family. As to quaternary structure, homodimer. Requires Mg(2+) as cofactor. [4Fe-4S] cluster is required as a cofactor.

Its subcellular location is the cytoplasm. The enzyme catalyses cytidine(32) in tRNA + S-sulfanyl-L-cysteinyl-[cysteine desulfurase] + AH2 + ATP = 2-thiocytidine(32) in tRNA + L-cysteinyl-[cysteine desulfurase] + A + AMP + diphosphate + H(+). The protein operates within tRNA modification. Its function is as follows. Catalyzes the ATP-dependent 2-thiolation of cytidine in position 32 of tRNA, to form 2-thiocytidine (s(2)C32). The sulfur atoms are provided by the cysteine/cysteine desulfurase (IscS) system. The polypeptide is tRNA-cytidine(32) 2-sulfurtransferase (Methylobacillus flagellatus (strain ATCC 51484 / DSM 6875 / VKM B-1610 / KT)).